Reading from the N-terminus, the 167-residue chain is Lipoprotein signal peptidase (167 aa).

Transmembrane regions (helical) follow at residues 10–30, 68–88, and 98–118; these read LIWL…KAWV, WQLW…AFWL, and SAVP…DRLM. Catalysis depends on residues aspartate 124 and aspartate 142. A helical transmembrane segment spans residues 138-158; the sequence is FNIADSAIVGGAIGIALFGLF.

This sequence belongs to the peptidase A8 family.

Its subcellular location is the cell inner membrane. It catalyses the reaction Release of signal peptides from bacterial membrane prolipoproteins. Hydrolyzes -Xaa-Yaa-Zaa-|-(S,diacylglyceryl)Cys-, in which Xaa is hydrophobic (preferably Leu), and Yaa (Ala or Ser) and Zaa (Gly or Ala) have small, neutral side chains.. The protein operates within protein modification; lipoprotein biosynthesis (signal peptide cleavage). In terms of biological role, this protein specifically catalyzes the removal of signal peptides from prolipoproteins. The chain is Lipoprotein signal peptidase from Xanthomonas campestris pv. campestris (strain 8004).